A 176-amino-acid polypeptide reads, in one-letter code: RNA 2',3'-cyclic phosphodiesterase (176 aa).

H39 functions as the Proton donor in the catalytic mechanism. 2 consecutive short sequence motifs (HXTX) follow at residues H39–L42 and H122–V125. H122 (proton acceptor) is an active-site residue.

Belongs to the 2H phosphoesterase superfamily. ThpR family.

The catalysed reaction is a 3'-end 2',3'-cyclophospho-ribonucleotide-RNA + H2O = a 3'-end 2'-phospho-ribonucleotide-RNA + H(+). In terms of biological role, hydrolyzes RNA 2',3'-cyclic phosphodiester to an RNA 2'-phosphomonoester. The polypeptide is RNA 2',3'-cyclic phosphodiesterase (Archaeoglobus fulgidus (strain ATCC 49558 / DSM 4304 / JCM 9628 / NBRC 100126 / VC-16)).